A 587-amino-acid polypeptide reads, in one-letter code: Arginine--tRNA ligase (587 aa).

The 'HIGH' region signature appears at 127–137; the sequence is PNLAKEMHVGH.

This sequence belongs to the class-I aminoacyl-tRNA synthetase family. As to quaternary structure, monomer.

The protein resides in the cytoplasm. It carries out the reaction tRNA(Arg) + L-arginine + ATP = L-arginyl-tRNA(Arg) + AMP + diphosphate. This is Arginine--tRNA ligase from Pseudomonas aeruginosa (strain ATCC 15692 / DSM 22644 / CIP 104116 / JCM 14847 / LMG 12228 / 1C / PRS 101 / PAO1).